A 112-amino-acid polypeptide reads, in one-letter code: Large ribosomal subunit protein uL18 (112 aa).

It belongs to the universal ribosomal protein uL18 family. As to quaternary structure, part of the 50S ribosomal subunit; part of the 5S rRNA/L5/L18/L25 subcomplex. Contacts the 5S and 23S rRNAs.

In terms of biological role, this is one of the proteins that bind and probably mediate the attachment of the 5S RNA into the large ribosomal subunit, where it forms part of the central protuberance. This Deinococcus deserti (strain DSM 17065 / CIP 109153 / LMG 22923 / VCD115) protein is Large ribosomal subunit protein uL18.